We begin with the raw amino-acid sequence, 182 residues long: Oligoribonuclease (182 aa).

The Exonuclease domain occupies 8–171 (LIWLDMEMTG…ADIHESIGEL (164 aa)). Tyr-129 is a catalytic residue.

Belongs to the oligoribonuclease family.

It is found in the cytoplasm. In terms of biological role, 3'-to-5' exoribonuclease specific for small oligoribonucleotides. The sequence is that of Oligoribonuclease from Azoarcus sp. (strain BH72).